The sequence spans 1375 residues: DNA-directed RNA polymerase subunit beta (1375 aa).

It belongs to the RNA polymerase beta chain family. As to quaternary structure, the RNAP catalytic core consists of 2 alpha, 1 beta, 1 beta' and 1 omega subunit. When a sigma factor is associated with the core the holoenzyme is formed, which can initiate transcription.

It carries out the reaction RNA(n) + a ribonucleoside 5'-triphosphate = RNA(n+1) + diphosphate. Its function is as follows. DNA-dependent RNA polymerase catalyzes the transcription of DNA into RNA using the four ribonucleoside triphosphates as substrates. The sequence is that of DNA-directed RNA polymerase subunit beta from Coxiella burnetii (strain RSA 331 / Henzerling II).